We begin with the raw amino-acid sequence, 303 residues long: Bidirectional sugar transporter SWEET14 (303 aa).

At 1–9 the chain is on the extracellular side; it reads MAGMSLQHP. The helical transmembrane segment at 10–30 threads the bilayer; it reads WAFAFGLLGNIISFMTYLAPL. Residues 13-98 form the MtN3/slv 1 domain; the sequence is AFGLLGNIIS…AVYLVYAPKK (86 aa). Over 31 to 44 the chain is Cytoplasmic; that stretch reads PTFYRIYKSKSTQG. A helical transmembrane segment spans residues 45 to 65; that stretch reads FQSVPYVVALFSAMLWIYYAL. Residues 66–72 lie on the Extracellular side of the membrane; the sequence is LKSDECL. A helical membrane pass occupies residues 73–93; the sequence is LITINSAGCVIETIYIAVYLV. The Cytoplasmic segment spans residues 94–105; it reads YAPKKAKMFTAK. The helical transmembrane segment at 106-126 threads the bilayer; it reads LLLLVNVGVFGLILLLTLLLS. At 127–133 the chain is on the extracellular side; it reads AGDRRIV. The chain crosses the membrane as a helical span at residues 134 to 154; the sequence is VLGWVCVGFSVSVFVAPLSII. The MtN3/slv 2 domain occupies 134–217; that stretch reads VLGWVCVGFS…MGLYAMYRNS (84 aa). The Cytoplasmic segment spans residues 155–167; the sequence is RLVVRTKSVEFMP. Residues 168 to 188 form a helical membrane-spanning segment; the sequence is FSLSFSLTISAVVWFLYGLLI. The Extracellular segment spans residues 189–192; that stretch reads KDKY. The chain crosses the membrane as a helical span at residues 193 to 213; the sequence is VALPNVLGFSFGVIQMGLYAM. Over 214–303 the chain is Cytoplasmic; the sequence is YRNSTPKAVL…AGAGEKKVAA (90 aa). The interval 266–290 is disordered; that stretch reads HPVDVESPPAEAPPEEDDKAAAATA.

It belongs to the SWEET sugar transporter family. As to quaternary structure, forms homooligomers and/or heterooligomers.

The protein resides in the cell membrane. In terms of biological role, mediates both low-affinity uptake and efflux of sugar across the plasma membrane. Functionally, confers blight susceptibility. Confers TAL effector-mediated susceptibility to Xanthomonas oryzae pv. oryzae. The chain is Bidirectional sugar transporter SWEET14 (SWEET14) from Oryza sativa subsp. japonica (Rice).